The primary structure comprises 133 residues: DNA-directed RNA polymerase subunit omega (133 aa).

Belongs to the RNA polymerase subunit omega family. The RNAP catalytic core consists of 2 alpha, 1 beta, 1 beta' and 1 omega subunit. When a sigma factor is associated with the core the holoenzyme is formed, which can initiate transcription.

It catalyses the reaction RNA(n) + a ribonucleoside 5'-triphosphate = RNA(n+1) + diphosphate. Functionally, promotes RNA polymerase assembly. Latches the N- and C-terminal regions of the beta' subunit thereby facilitating its interaction with the beta and alpha subunits. This is DNA-directed RNA polymerase subunit omega from Mesorhizobium japonicum (strain LMG 29417 / CECT 9101 / MAFF 303099) (Mesorhizobium loti (strain MAFF 303099)).